A 329-amino-acid polypeptide reads, in one-letter code: Red chlorophyll catabolite reductase 1, chloroplastic (329 aa).

Residues 1–11 (MLQLRSPPPAT) are compositionally biased toward pro residues. The transit peptide at 1–50 (MLQLRSPPPATSSPSSAVSFPTLAPRLLPLRRRRRGAGSQLGGKTSSAVR) directs the protein to the chloroplast. Residues 1–61 (MLQLRSPPPA…SSAAAPGATE (61 aa)) form a disordered region. Composition is skewed to low complexity over residues 12–28 (SSPS…PRLL) and 46–59 (SSAV…APGA). Red chlorophyll catabolite contacts are provided by residues Glu163, 216-218 (YRS), and Asp299.

Expressed in leaves. Expressed at low levels in roots, stems, panicles and seeds.

It is found in the plastid. Its subcellular location is the chloroplast. It carries out the reaction primary fluorescent chlorophyll catabolite + 2 oxidized [2Fe-2S]-[ferredoxin] = red chlorophyll catabolite + 2 reduced [2Fe-2S]-[ferredoxin] + 3 H(+). The protein operates within porphyrin-containing compound metabolism; chlorophyll degradation. Functionally, catalyzes the key reaction of chlorophyll catabolism, porphyrin macrocycle cleavage of pheophorbide a (pheide a) to a primary fluorescent catabolite (pFCC). Works in a two-step reaction with pheophorbide a oxygenase (PaO) by reducing the C20/C1 double bond of the intermediate, RCC. Belongs to the chlorophyll catabolic enzymes (CCEs). May play a role in senescence and response to wounding. This chain is Red chlorophyll catabolite reductase 1, chloroplastic, found in Oryza sativa subsp. japonica (Rice).